The sequence spans 229 residues: Coiled-coil domain-containing protein 134 (229 aa).

Residues 1–22 (MDLLQFLAAFSVLLWPGTEVTG) form the signal peptide. An N-linked (GlcNAc...) asparagine glycan is attached at Asn148. The interval 182–229 (FKTDQTEFIPSTDPFQKALREEEKRRKKEERRKEIRKGPRISRSQSEL) is disordered. The stretch at 196-218 (FQKALREEEKRRKKEERRKEIRK) forms a coiled coil. The short motif at 226–229 (QSEL) is the Prevents secretion from ER element.

Belongs to the CCDC134 family. In terms of assembly, interacts with TADA2A. Associates with the PCAF complex via TADA2A binding. In terms of processing, O-glycosylated, with additional sialic acid modifications.

Its subcellular location is the endoplasmic reticulum lumen. The protein localises to the secreted. It is found in the cytoplasm. The protein resides in the nucleus. Its function is as follows. Molecular adapter required to prevent protein hyperglycosylation of HSP90B1: during translation, associates with nascent HSP90B1 and the STT3A catalytic component of the OST-A complex and tethers them to a specialized translocon that forms a microenvironment for HSP90B1 folding. In the CCDC134-containing translocon, STT3A associates with the SRT pseudosubstrate motif of HSP90B1, preventing access to facultative glycosylation sites until folding is completed, preventing hyperglycosylation and subsequent degradation of HSP90B1. In extracellular secreted form, promotes proliferation and activation of CD8(+) T-cells, suggesting a cytokine-like function. May inhibit ERK and JNK signaling activity. May suppress cell migration and invasion activity, via its effects on ERK and JNK signaling. May also localize in the nucleus: enhances stability of the PCAF histone acetyltransferase (HAT) complex member TADA2A and thus promotes PCAF-mediated histone acetyltransferase activity. Has a critical role in the regulation of osteogenesis and bone development. The polypeptide is Coiled-coil domain-containing protein 134 (Ccdc134) (Mus musculus (Mouse)).